The chain runs to 147 residues: Hemoglobin subunit epsilon (147 aa).

The Globin domain occupies 3–147 (HFTAEEKAAV…VAIALAHKYH (145 aa)). S14 and S51 each carry phosphoserine. Residues H64 and H93 each contribute to the heme b site.

The protein belongs to the globin family. As to quaternary structure, heterotetramer of two alpha chains and two epsilon chains in early embryonic hemoglobin Gower-2; two zeta chains and two epsilon chains in early embryonic hemoglobin Gower-1. As to expression, red blood cells.

Functionally, the epsilon chain is a beta-type chain of early mammalian embryonic hemoglobin. This Symphalangus syndactylus (Siamang) protein is Hemoglobin subunit epsilon (HBE1).